A 387-amino-acid polypeptide reads, in one-letter code: 1,3-propanediol dehydrogenase (387 aa).

The protein belongs to the iron-containing alcohol dehydrogenase family. In terms of assembly, homooctamer. Fe cation is required as a cofactor.

The catalysed reaction is propane-1,3-diol + NAD(+) = 3-hydroxypropanal + NADH + H(+). The protein is 1,3-propanediol dehydrogenase (dhaT) of Klebsiella pneumoniae.